The primary structure comprises 268 residues: Type III pantothenate kinase (268 aa).

6-13 provides a ligand contact to ATP; that stretch reads DVGNTNIV. Residues tyrosine 100 and 107–110 contribute to the substrate site; that span reads GADR. Catalysis depends on aspartate 109, which acts as the Proton acceptor. Aspartate 129 lines the K(+) pocket. Threonine 132 provides a ligand contact to ATP. Threonine 184 lines the substrate pocket.

This sequence belongs to the type III pantothenate kinase family. As to quaternary structure, homodimer. NH4(+) serves as cofactor. K(+) is required as a cofactor.

Its subcellular location is the cytoplasm. It carries out the reaction (R)-pantothenate + ATP = (R)-4'-phosphopantothenate + ADP + H(+). It participates in cofactor biosynthesis; coenzyme A biosynthesis; CoA from (R)-pantothenate: step 1/5. Functionally, catalyzes the phosphorylation of pantothenate (Pan), the first step in CoA biosynthesis. In Alkaliphilus metalliredigens (strain QYMF), this protein is Type III pantothenate kinase.